A 502-amino-acid chain; its full sequence is ATP synthase subunit alpha, chloroplastic (502 aa).

170–177 (GDRQTGKS) contributes to the ATP binding site.

The protein belongs to the ATPase alpha/beta chains family. As to quaternary structure, F-type ATPases have 2 components, CF(1) - the catalytic core - and CF(0) - the membrane proton channel. CF(1) has five subunits: alpha(3), beta(3), gamma(1), delta(1), epsilon(1). CF(0) has four main subunits: a, b, b' and c.

It localises to the plastid. The protein resides in the chloroplast thylakoid membrane. The enzyme catalyses ATP + H2O + 4 H(+)(in) = ADP + phosphate + 5 H(+)(out). Its function is as follows. Produces ATP from ADP in the presence of a proton gradient across the membrane. The alpha chain is a regulatory subunit. In Guillardia theta (Cryptophyte), this protein is ATP synthase subunit alpha, chloroplastic.